The sequence spans 451 residues: Chaperone SurA (451 aa).

The signal sequence occupies residues 1–26; sequence MKKIIPTNLFKLISILFILTPFFAWS. 2 PpiC domains span residues 179-280 and 290-388; these read DVEY…QLQG and KQYH…FLDG.

The protein localises to the periplasm. It catalyses the reaction [protein]-peptidylproline (omega=180) = [protein]-peptidylproline (omega=0). Its function is as follows. Chaperone involved in the correct folding and assembly of outer membrane proteins. Recognizes specific patterns of aromatic residues and the orientation of their side chains, which are found more frequently in integral outer membrane proteins. May act in both early periplasmic and late outer membrane-associated steps of protein maturation. This chain is Chaperone SurA, found in Hydrogenovibrio crunogenus (strain DSM 25203 / XCL-2) (Thiomicrospira crunogena).